The sequence spans 387 residues: Succinate--CoA ligase [ADP-forming] subunit beta (387 aa).

ATP contacts are provided by residues Lys-46, 53–55 (GRG), Glu-99, Cys-102, and Glu-107. Positions 196 and 210 each coordinate Mg(2+). Residues Asn-261 and 318–320 (GIV) each bind substrate.

It belongs to the succinate/malate CoA ligase beta subunit family. In terms of assembly, heterotetramer of two alpha and two beta subunits. The cofactor is Mg(2+).

The catalysed reaction is succinate + ATP + CoA = succinyl-CoA + ADP + phosphate. It catalyses the reaction GTP + succinate + CoA = succinyl-CoA + GDP + phosphate. The protein operates within carbohydrate metabolism; tricarboxylic acid cycle; succinate from succinyl-CoA (ligase route): step 1/1. Succinyl-CoA synthetase functions in the citric acid cycle (TCA), coupling the hydrolysis of succinyl-CoA to the synthesis of either ATP or GTP and thus represents the only step of substrate-level phosphorylation in the TCA. The beta subunit provides nucleotide specificity of the enzyme and binds the substrate succinate, while the binding sites for coenzyme A and phosphate are found in the alpha subunit. In Campylobacter hominis (strain ATCC BAA-381 / DSM 21671 / CCUG 45161 / LMG 19568 / NCTC 13146 / CH001A), this protein is Succinate--CoA ligase [ADP-forming] subunit beta.